Consider the following 403-residue polypeptide: Phosphopentomutase (403 aa).

Mn(2+) contacts are provided by D13, D298, H303, D339, H340, and H351.

It belongs to the phosphopentomutase family. Requires Mn(2+) as cofactor.

It is found in the cytoplasm. The enzyme catalyses 2-deoxy-alpha-D-ribose 1-phosphate = 2-deoxy-D-ribose 5-phosphate. It catalyses the reaction alpha-D-ribose 1-phosphate = D-ribose 5-phosphate. Its pathway is carbohydrate degradation; 2-deoxy-D-ribose 1-phosphate degradation; D-glyceraldehyde 3-phosphate and acetaldehyde from 2-deoxy-alpha-D-ribose 1-phosphate: step 1/2. Isomerase that catalyzes the conversion of deoxy-ribose 1-phosphate (dRib-1-P) and ribose 1-phosphate (Rib-1-P) to deoxy-ribose 5-phosphate (dRib-5-P) and ribose 5-phosphate (Rib-5-P), respectively. This Streptococcus pneumoniae serotype 2 (strain D39 / NCTC 7466) protein is Phosphopentomutase.